The sequence spans 112 residues: MNATILVKIITPLSIALEKQAKMVTMSGEEGMFGVLPSHVPMIVSLKAGLVQVYIDDMHKSENTYLISSGVTEVTANYINIATETAINVTNFSEAEIATKLLDLQKTLSDQH.

It belongs to the ATPase epsilon chain family. In terms of assembly, F-type ATPases have 2 components, CF(1) - the catalytic core - and CF(0) - the membrane proton channel. CF(1) has five subunits: alpha(3), beta(3), gamma(1), delta(1), epsilon(1). CF(0) has three main subunits: a, b and c.

Its subcellular location is the cell membrane. Functionally, produces ATP from ADP in the presence of a proton gradient across the membrane. The polypeptide is ATP synthase epsilon chain (Rickettsia africae (strain ESF-5)).